The sequence spans 132 residues: Cell division protein FtsL (132 aa).

Residues 1 to 50 (MAELKKMRHNHYDVPVMDEPVIASQIKKTNQKKESFQLPQKKLNKISVFE) are Cytoplasmic-facing. The helical transmembrane segment at 51–71 (KILCILLLCSIVGIVVITIQI) threads the bilayer. Residues 72-132 (RTTISETMNN…EIDGNLRKVK (61 aa)) are Extracellular-facing.

This sequence belongs to the FtsL family.

The protein resides in the cell membrane. Essential cell division protein. The polypeptide is Cell division protein FtsL (Melissococcus plutonius (strain ATCC 35311 / DSM 29964 / CIP 104052 / LMG 20360 / NCIMB 702443)).